The following is a 489-amino-acid chain: L-arabinose isomerase (489 aa).

Residues glutamate 300, glutamate 325, histidine 342, and histidine 441 each coordinate Mn(2+).

The protein belongs to the arabinose isomerase family. Requires Mn(2+) as cofactor.

It carries out the reaction beta-L-arabinopyranose = L-ribulose. Its pathway is carbohydrate degradation; L-arabinose degradation via L-ribulose; D-xylulose 5-phosphate from L-arabinose (bacterial route): step 1/3. In terms of biological role, catalyzes the conversion of L-arabinose to L-ribulose. This is L-arabinose isomerase from Clostridium beijerinckii (strain ATCC 51743 / NCIMB 8052) (Clostridium acetobutylicum).